A 406-amino-acid polypeptide reads, in one-letter code: ESX-5 secretion system protein EccE5 (406 aa).

A run of 2 helical transmembrane segments spans residues 9 to 29 (LALS…ILAV) and 43 to 63 (VAWW…VVSY).

This sequence belongs to the EccE family. In terms of assembly, part of the ESX-5 / type VII secretion system (T7SS), which is composed of cytosolic and membrane components. The ESX-5 membrane complex is composed of EccB5, EccC5, EccD5 and EccE5.

Its subcellular location is the cell inner membrane. Its function is as follows. Part of the ESX-5 specialized secretion system, which is responsible for the secretion of EsxN and a number of PE_PGRS and PPE proteins, including PPE41. In Mycobacterium tuberculosis (strain ATCC 25618 / H37Rv), this protein is ESX-5 secretion system protein EccE5.